The following is a 181-amino-acid chain: Acireductone dioxygenase (181 aa).

Residues His-97, His-99, Glu-103, and His-141 each contribute to the Fe(2+) site. Residues His-97, His-99, Glu-103, and His-141 each coordinate Ni(2+).

Belongs to the acireductone dioxygenase (ARD) family. Monomer. Requires Fe(2+) as cofactor. It depends on Ni(2+) as a cofactor.

It catalyses the reaction 1,2-dihydroxy-5-(methylsulfanyl)pent-1-en-3-one + O2 = 3-(methylsulfanyl)propanoate + CO + formate + 2 H(+). It carries out the reaction 1,2-dihydroxy-5-(methylsulfanyl)pent-1-en-3-one + O2 = 4-methylsulfanyl-2-oxobutanoate + formate + 2 H(+). The protein operates within amino-acid biosynthesis; L-methionine biosynthesis via salvage pathway; L-methionine from S-methyl-5-thio-alpha-D-ribose 1-phosphate: step 5/6. In terms of biological role, catalyzes 2 different reactions between oxygen and the acireductone 1,2-dihydroxy-3-keto-5-methylthiopentene (DHK-MTPene) depending upon the metal bound in the active site. Fe-containing acireductone dioxygenase (Fe-ARD) produces formate and 2-keto-4-methylthiobutyrate (KMTB), the alpha-ketoacid precursor of methionine in the methionine recycle pathway. Ni-containing acireductone dioxygenase (Ni-ARD) produces methylthiopropionate, carbon monoxide and formate, and does not lie on the methionine recycle pathway. In Pseudomonas savastanoi pv. phaseolicola (strain 1448A / Race 6) (Pseudomonas syringae pv. phaseolicola (strain 1448A / Race 6)), this protein is Acireductone dioxygenase.